The primary structure comprises 31 residues: Photosystem II reaction center protein T (31 aa).

A helical membrane pass occupies residues 3–23 (AFSYVLILTLALVTLFFAVAF).

Belongs to the PsbT family. As to quaternary structure, PSII is composed of 1 copy each of membrane proteins PsbA, PsbB, PsbC, PsbD, PsbE, PsbF, PsbH, PsbI, PsbJ, PsbK, PsbL, PsbM, PsbT, PsbX, PsbY, Psb30/Ycf12, peripheral proteins PsbO, CyanoQ (PsbQ), PsbU, PsbV and a large number of cofactors. It forms dimeric complexes.

Its subcellular location is the cellular thylakoid membrane. In terms of biological role, found at the monomer-monomer interface of the photosystem II (PS II) dimer, plays a role in assembly and dimerization of PSII. PSII is a light-driven water plastoquinone oxidoreductase, using light energy to abstract electrons from H(2)O, generating a proton gradient subsequently used for ATP formation. This is Photosystem II reaction center protein T from Prochlorococcus marinus (strain NATL2A).